Reading from the N-terminus, the 1093-residue chain is Error-prone DNA polymerase (1093 aa).

The interval 1-55 (MGWFNGPPSWAEMERVLDSKPRRAGESAAPEPDGPLSRGRATYRPPDEGRAARSS) is disordered. Over residues 12–25 (EMERVLDSKPRRAG) the composition is skewed to basic and acidic residues.

This sequence belongs to the DNA polymerase type-C family. DnaE2 subfamily.

It is found in the cytoplasm. The enzyme catalyses DNA(n) + a 2'-deoxyribonucleoside 5'-triphosphate = DNA(n+1) + diphosphate. Functionally, DNA polymerase involved in damage-induced mutagenesis and translesion synthesis (TLS). It is not the major replicative DNA polymerase. In Mycolicibacterium paratuberculosis (strain ATCC BAA-968 / K-10) (Mycobacterium paratuberculosis), this protein is Error-prone DNA polymerase.